A 1580-amino-acid polypeptide reads, in one-letter code: Adhesion G protein-coupled receptor L3 (1580 aa).

The N-terminal stretch at 1 to 19 (MWPSQLLVFMMLLAPIIHG) is a signal peptide. The Extracellular portion of the chain corresponds to 20–949 (GKHSERHPAL…VHDLLLDVIT (930 aa)). A disordered region spans residues 23–81 (SERHPALASPLRHAERGPGGALPPRHLLQQPAAERATAHRGPGPRGATRGVRGPGAHGA). The region spanning 103-192 (SCESYPIELR…KYLEVQYECV (90 aa)) is the SUEL-type lectin domain. Intrachain disulfides connect Cys104-Cys134, Cys113-Cys191, Cys146-Cys178, Cys159-Cys165, and Cys203-Cys385. The N-linked (GlcNAc...) asparagine glycan is linked to Asn161. The Olfactomedin-like domain maps to 202–461 (LCPGLLKGVY…VVKYSLDFGP (260 aa)). The tract at residues 317-347 (YHDTSPYRWGGKSDIDLAVDENGLWVIYATE) is interaction with FLRT3. Residues Asp332, Asn380, Ala381, and Val435 each coordinate Ca(2+). Positions 494–540 (EISTTGPLGTGSTTTSTTLRTTTWSPGRSTTPSVSGRRNRSTSTPSP) are disordered. The segment covering 496-521 (STTGPLGTGSTTTSTTLRTTTWSPGR) has biased composition (low complexity). The segment covering 522 to 539 (STTPSVSGRRNRSTSTPS) has biased composition (polar residues). Asn532, Asn617, Asn827, Asn840, Asn885, and Asn911 each carry an N-linked (GlcNAc...) asparagine glycan. Positions 756–935 (DIVRENTDNI…AVLMAHVEVK (180 aa)) constitute a GAIN-B domain. 2 disulfides stabilise this stretch: Cys886–Cys917 and Cys905–Cys919. Residues 886-935 (CSFWSYSKRTMTGYWSTQGCRLLTTNKTHTTCSCNHLTNFAVLMAHVEVK) are GPS. A stachel region spans residues 923–939 (TNFAVLMAHVEVKHSDA). Residues 950–970 (WVGILLSLVCLLICIFTFCFF) form a helical membrane-spanning segment. Topologically, residues 971–978 (RGLQSDRN) are cytoplasmic. The helical transmembrane segment at 979-999 (TIHKNLCISLFVAELLFLIGI) threads the bilayer. N-linked (GlcNAc...) asparagine glycosylation occurs at Asn1000. Residues 1000-1007 (NRTDQPIA) lie on the Extracellular side of the membrane. The chain crosses the membrane as a helical span at residues 1008 to 1028 (CAVFAALLHFFFLAAFTWMFL). At 1029–1050 (EGVQLYIMLVEVFESEHSRRKY) the chain is on the cytoplasmic side. A helical transmembrane segment spans residues 1051-1071 (FYLVGYGMPALIVAVSAAVDY). The Extracellular segment spans residues 1072–1088 (RSYGTDKVCWLRLDTYF). A helical transmembrane segment spans residues 1089-1109 (IWSFIGPATLIIMLNVIFLGI). Residues 1110-1142 (ALYKMFHHTAILKPESGCLDNINYEDNRPFIKS) are Cytoplasmic-facing. Residues 1143 to 1163 (WVIGAIALLCLLGLTWAFGLM) traverse the membrane as a helical segment. At 1164–1169 (YINEST) the chain is on the extracellular side. Asn1166 carries an N-linked (GlcNAc...) asparagine glycan. Residues 1170 to 1190 (VIMAYLFTIFNSLQGMFIFIF) form a helical membrane-spanning segment. Residues 1191–1580 (HCVLQKKVRK…KGPAHLVTSL (390 aa)) are Cytoplasmic-facing. Residues 1213 to 1238 (GRSTESSIGSGKTSGSRTPGRYSTGS) form a disordered region. Ser1254 bears the Phosphoserine mark. Residues 1555 to 1580 (FIVPPNKDGTPPEGSSKGPAHLVTSL) are disordered. A PDZ-binding motif is present at residues 1575 to 1580 (HLVTSL).

It belongs to the G-protein coupled receptor 2 family. LN-TM7 subfamily. As to quaternary structure, heterodimer of 2 chains generated by proteolytic processing; the large extracellular N-terminal fragment and the membrane-bound C-terminal fragment predominantly remain associated and non-covalently linked. Interacts (via olfactomedin-like domain) with FLRT1 (via extracellular domain). Interacts (via olfactomedin-like domain) with FLRT2 (via extracellular domain). Interacts (via olfactomedin-like domain) with FLRT3 (via extracellular domain); the interaction is direct. Interacts (via extracellular domain) with TENM1. Interacts (via extracellular domain) with TENM2. Interacts (via extracellular domain) with TENM3. Identified in a complex with FLRT3 and UNC5B; does not interact with UNC5B by itself. Identified in a complex with FLRT3 and UNC5D; does not interact with UNC5D by itself. In terms of assembly, interacts (via PDZ-binding motif) with SHANK3. Interacts (via PDZ-binding motif) with DLG4. Post-translationally, autoproteolytically processed at the GPS region of the GAIN-B domain; this cleavage modulates receptor activity. As to expression, brain-specific distribution but low levels are also detected in lung and spleen.

It is found in the cell membrane. The protein localises to the postsynaptic cell membrane. Its subcellular location is the cell projection. It localises to the axon. The protein resides in the cell junction. Forms a heterodimer of 2 chains generated by proteolytic processing that remain associated through non-covalent interactions mediated by the GAIN-B domain. In the inactivated receptor, the Stachel sequence (also named stalk) is embedded in the GAIN-B domain, where it adopts a beta-strand conformation. On activation, the Stachel moves into the 7 transmembrane region and adopts a twisted hook-shaped configuration that forms contacts within the receptor, leading to coupling of a G-alpha protein, which activates signaling. The cleaved GAIN-B and N-terminal domains can then dissociate from the rest of the receptor. Orphan adhesion G-protein coupled receptor (aGPCR), which mediates synapse specificity. Ligand binding causes a conformation change that triggers signaling via guanine nucleotide-binding proteins (G proteins) and modulates the activity of downstream effectors. ADGRL3 is coupled with different classes of G alpha proteins, such as G(12)/G(13), G(s), G(i) or G(q), depending on the context. Coupling to G(12)/G(13) G proteins, which mediates the activation Rho small GTPases is the most efficient. Following G-protein coupled receptor activation, associates with cell adhesion molecules that are expressed at the surface of adjacent cells to direct synapse specificity. Specifically mediates the establishment of Schaffer-collateral synapses formed by CA3-region axons on CA1-region pyramidal neurons in the hippocampus. Localizes to postsynaptic spines in excitatory synapses in the S.oriens and S.radiatum and interacts with presynaptic cell adhesion molecules FLRT3 and TENM2, promoting synapse formation. Plays a role in the development of glutamatergic synapses in the cortex. Important in determining the connectivity rates between the principal neurons in the cortex. In terms of biological role, orphan adhesion G-protein coupled receptor (aGPCR), which mediates synapse specificity. Ligand binding causes a conformation change that triggers signaling via guanine nucleotide-binding proteins (G proteins) and modulates the activity of downstream effectors, such as adenylate cyclase. Isoform 1 is specifically coupled to G(s) G proteins and mediates activation of adenylate cyclase activity. Following G-protein coupled receptor activation, undergoes liquid-liquid phase transition, associates with (1) cell adhesion molecules that are expressed at the surface of adjacent cells, as well as (2) PDZ-containing proteins, such as SHANK3 and DLG4, in the cytoplasm to direct synapse formation. The sequence is that of Adhesion G protein-coupled receptor L3 from Bos taurus (Bovine).